The following is a 308-amino-acid chain: Ornithine carbamoyltransferase (308 aa).

Residues arginine 103 and 130 to 133 contribute to the carbamoyl phosphate site; that span reads HPAQ. L-ornithine-binding positions include asparagine 162, aspartate 221, and 225–226; that span reads SM. Carbamoyl phosphate is bound by residues 261-262 and arginine 289; that span reads CL.

Belongs to the aspartate/ornithine carbamoyltransferase superfamily. OTCase family.

Its subcellular location is the cytoplasm. The enzyme catalyses carbamoyl phosphate + L-ornithine = L-citrulline + phosphate + H(+). The protein operates within amino-acid biosynthesis; L-arginine biosynthesis; L-arginine from L-ornithine and carbamoyl phosphate: step 1/3. Functionally, reversibly catalyzes the transfer of the carbamoyl group from carbamoyl phosphate (CP) to the N(epsilon) atom of ornithine (ORN) to produce L-citrulline. This Deinococcus radiodurans (strain ATCC 13939 / DSM 20539 / JCM 16871 / CCUG 27074 / LMG 4051 / NBRC 15346 / NCIMB 9279 / VKM B-1422 / R1) protein is Ornithine carbamoyltransferase.